A 280-amino-acid polypeptide reads, in one-letter code: Protein lyl-1 (280 aa).

The disordered stretch occupies residues 1–60 (MCPPQAQAEVGPTMTEKAEMVCAPSPAPAPPPKPASPGPPQVEEVGHRGGSSPPRLPPGV). A compositionally biased stretch (pro residues) spans 25 to 40 (SPAPAPPPKPASPGPP). The 53-residue stretch at 150–202 (ARRVFTNSRERWRQQNVNGAFAELRKLLPTHPPDRKLSKNEVLRLAMKYIGFL) folds into the bHLH domain. A disordered region spans residues 214–280 (AAGPTPPGPR…EQTALSPEVR (67 aa)). The span at 229 to 245 (RVPDDGARRGSGRRAEA) shows a compositional bias: basic and acidic residues. Low complexity predominate over residues 257-267 (PDGSPGGAARP). A phosphoserine mark is found at S260 and S276.

As to quaternary structure, efficient DNA binding requires dimerization with another bHLH protein.

The protein resides in the nucleus. The sequence is that of Protein lyl-1 (LYL1) from Homo sapiens (Human).